We begin with the raw amino-acid sequence, 96 residues long: Methanol dehydrogenase [cytochrome c] subunit 2 (96 aa).

An N-terminal signal peptide occupies residues 1–22 (MKTTLIAAAIVALSGLAAPALA). A disulfide bridge connects residues Cys-28 and Cys-34. Residues 45–75 (IAGSKYDPKHDPKELNKQADSIKQMEERNKK) are disordered. Residues 50-61 (YDPKHDPKELNK) show a composition bias toward basic and acidic residues.

The protein belongs to the methanol dehydrogenase subunit 2 family. As to quaternary structure, heterotetramer composed of 2 alpha and 2 beta subunits.

It localises to the periplasm. The catalysed reaction is 2 Fe(III)-[cytochrome cL] + a primary alcohol = 2 Fe(II)-[cytochrome cL] + an aldehyde + 2 H(+). Catalyzes the oxidation of primary alcohols including methanol. This chain is Methanol dehydrogenase [cytochrome c] subunit 2 (moxI), found in Methylorubrum extorquens (strain ATCC 14718 / DSM 1338 / JCM 2805 / NCIMB 9133 / AM1) (Methylobacterium extorquens).